A 101-amino-acid polypeptide reads, in one-letter code: NAD(P)H-quinone oxidoreductase subunit 4L, chloroplastic (101 aa).

A run of 3 helical transmembrane segments spans residues 2–22 (MLEYVLGLSAYLFSIGIYGLI), 32–52 (MCLELILNAVNLNFVTFSDFF), and 61–81 (ILSIFVISIAAAEAAIGPAIV).

Belongs to the complex I subunit 4L family. As to quaternary structure, NDH is composed of at least 16 different subunits, 5 of which are encoded in the nucleus.

The protein resides in the plastid. Its subcellular location is the chloroplast thylakoid membrane. The catalysed reaction is a plastoquinone + NADH + (n+1) H(+)(in) = a plastoquinol + NAD(+) + n H(+)(out). The enzyme catalyses a plastoquinone + NADPH + (n+1) H(+)(in) = a plastoquinol + NADP(+) + n H(+)(out). Functionally, NDH shuttles electrons from NAD(P)H:plastoquinone, via FMN and iron-sulfur (Fe-S) centers, to quinones in the photosynthetic chain and possibly in a chloroplast respiratory chain. The immediate electron acceptor for the enzyme in this species is believed to be plastoquinone. Couples the redox reaction to proton translocation, and thus conserves the redox energy in a proton gradient. In Populus alba (White poplar), this protein is NAD(P)H-quinone oxidoreductase subunit 4L, chloroplastic.